Consider the following 147-residue polypeptide: Phospholipase A2 inhibitor subunit A (147 aa).

The C-type lectin domain maps to 62 to 143 (EICEEAGGHI…DENLLVVCEF (82 aa)). Intrachain disulfides connect cysteine 64-cysteine 141 and cysteine 119-cysteine 133. An N-linked (GlcNAc...) asparagine glycan is attached at asparagine 103.

The protein belongs to the alpha-type phospholipase A2 inhibitor family. Homo- or heterotrimer; homotrimer of PLI-A chains, two PLI-A and one PLI-B chains, one PLI-A and two PLI-B chains, and homotrimer of PLI-B chains (with a ratio of 1:3:3:1). Expressed by the liver.

It is found in the secreted. In terms of biological role, PLI binds directly phospholipase A2 in the presence or absence of calcium. Inhibitory activity of the PLI-A homotrimer is more specific than that of the PLI-B homotrimer. The chain is Phospholipase A2 inhibitor subunit A from Protobothrops flavoviridis (Habu).